The following is a 352-amino-acid chain: Sodium-lithium/proton antiporter (352 aa).

8 helical membrane-spanning segments follow: residues 11-31 (ILLL…PVSV), 32-52 (PLII…WMQF), 61-81 (AVTI…TYAV), 159-179 (IPEY…FMLE), 216-236 (AQFL…FWIT), 241-261 (IVMS…SIVI), 271-291 (IVGD…LLAI), and 317-337 (IGLQ…VIAF).

It belongs to the autoinducer-2 exporter (AI-2E) (TC 2.A.86) family.

Its subcellular location is the cell membrane. In terms of biological role, catalyzes the pH-dependent efflux of sodium and lithium in exchange for external protons. The sequence is that of Sodium-lithium/proton antiporter from Halobacillus andaensis.